A 303-amino-acid chain; its full sequence is Acetyl-coenzyme A carboxylase carboxyl transferase subunit beta (303 aa).

The CoA carboxyltransferase N-terminal domain maps to 29-298 (LWVKCPETGQ…ATPAPASAAA (270 aa)).

It belongs to the AccD/PCCB family. As to quaternary structure, acetyl-CoA carboxylase is a heterohexamer composed of biotin carboxyl carrier protein (AccB), biotin carboxylase (AccC) and two subunits each of ACCase subunit alpha (AccA) and ACCase subunit beta (AccD).

It localises to the cytoplasm. The enzyme catalyses N(6)-carboxybiotinyl-L-lysyl-[protein] + acetyl-CoA = N(6)-biotinyl-L-lysyl-[protein] + malonyl-CoA. It participates in lipid metabolism; malonyl-CoA biosynthesis; malonyl-CoA from acetyl-CoA: step 1/1. Component of the acetyl coenzyme A carboxylase (ACC) complex. Biotin carboxylase (BC) catalyzes the carboxylation of biotin on its carrier protein (BCCP) and then the CO(2) group is transferred by the transcarboxylase to acetyl-CoA to form malonyl-CoA. In Methylobacterium sp. (strain 4-46), this protein is Acetyl-coenzyme A carboxylase carboxyl transferase subunit beta.